A 393-amino-acid chain; its full sequence is Major outer membrane porin, serovar L1 (393 aa).

The first 22 residues, 1-22, serve as a signal peptide directing secretion; the sequence is MKKLLKSVLVFAALSSASSLQA.

The protein belongs to the chlamydial porin (CP) (TC 1.B.2) family. In terms of assembly, part of a disulfide cross-linked outer membrane complex (COMC) composed of the major outer membrane porin (MOMP), the small cysteine-rich protein (OmcA) and the large cysteine-rich periplasmic protein (OmcB).

The protein resides in the cell outer membrane. Functionally, in elementary bodies (EBs, the infectious stage, which is able to survive outside the host cell) provides the structural integrity of the outer envelope through disulfide cross-links with the small cysteine-rich protein and the large cysteine-rich periplasmic protein. It has been described in publications as the Sarkosyl-insoluble COMC (Chlamydia outer membrane complex), and serves as the functional equivalent of peptidoglycan. In terms of biological role, permits diffusion of specific solutes through the outer membrane. This chain is Major outer membrane porin, serovar L1 (ompA), found in Chlamydia trachomatis.